A 226-amino-acid chain; its full sequence is Ribonuclease 3 (226 aa).

An RNase III domain is found at 6–128 (INRLQRKLGY…LIGGVFLDSD (123 aa)). Glu-41 lines the Mg(2+) pocket. The active site involves Asp-45. 2 residues coordinate Mg(2+): Asp-114 and Glu-117. Residue Glu-117 is part of the active site. The DRBM domain occupies 155–225 (DPKTRLQEYL…AEQALKMLEL (71 aa)).

This sequence belongs to the ribonuclease III family. Homodimer. The cofactor is Mg(2+).

It localises to the cytoplasm. The catalysed reaction is Endonucleolytic cleavage to 5'-phosphomonoester.. Functionally, digests double-stranded RNA. Involved in the processing of primary rRNA transcript to yield the immediate precursors to the large and small rRNAs (23S and 16S). Processes some mRNAs, and tRNAs when they are encoded in the rRNA operon. Processes pre-crRNA and tracrRNA of type II CRISPR loci if present in the organism. This is Ribonuclease 3 from Enterobacter sp. (strain 638).